Reading from the N-terminus, the 154-residue chain is Prefoldin subunit alpha (154 aa).

Residues 92-102 (DNAVESLSTKQ) are compositionally biased toward polar residues. Residues 92–154 (DNAVESLSTK…MQDQQPEDNE (63 aa)) are disordered. Residues 103-114 (DALDNRIESLRD) are compositionally biased toward basic and acidic residues. The span at 128–148 (QQAQQMQQQMQQQQMQQMQDQ) shows a compositional bias: low complexity.

Belongs to the prefoldin subunit alpha family. As to quaternary structure, heterohexamer of two alpha and four beta subunits.

The protein localises to the cytoplasm. Molecular chaperone capable of stabilizing a range of proteins. Seems to fulfill an ATP-independent, HSP70-like function in archaeal de novo protein folding. The chain is Prefoldin subunit alpha from Haloquadratum walsbyi (strain DSM 16790 / HBSQ001).